We begin with the raw amino-acid sequence, 418 residues long: Flavin-dependent L-tryptophan oxidase VioA (418 aa).

A Mg(2+)-binding site is contributed by G13. S15 is an FAD binding site. G16 provides a ligand contact to Mg(2+). Positions 38, 46, and 64 each coordinate FAD. Substrate is bound by residues R64 and H163. Residue L208 coordinates FAD. A240 contributes to the Mg(2+) binding site. Position 309 (Y309) interacts with substrate. M398 serves as a coordination point for FAD.

This sequence belongs to the flavin monoamine oxidase family. Homodimer. FAD serves as cofactor. Requires Mg(2+) as cofactor.

It catalyses the reaction L-tryptophan + O2 = 2-iminio-3-(indol-3-yl)propanoate + H2O2. It carries out the reaction 7-chloro-L-tryptophan + O2 = 3-(7-chloroindol-3-yl)-2-iminopropanoate + H2O2. Its pathway is pigment biosynthesis; violacein biosynthesis. Functionally, the enzyme generates the imine form of indole 3-pyruvate (IPA) from L-tryptophan (L-Trp), with concomitant two-electron reduction of O(2) to H(2)O(2). This Chromobacterium violaceum (strain ATCC 12472 / DSM 30191 / JCM 1249 / CCUG 213 / NBRC 12614 / NCIMB 9131 / NCTC 9757 / MK) protein is Flavin-dependent L-tryptophan oxidase VioA (vioA).